The primary structure comprises 302 residues: tRNA pseudouridine synthase B (302 aa).

Asp-48 (nucleophile) is an active-site residue.

The protein belongs to the pseudouridine synthase TruB family. Type 1 subfamily.

It carries out the reaction uridine(55) in tRNA = pseudouridine(55) in tRNA. Responsible for synthesis of pseudouridine from uracil-55 in the psi GC loop of transfer RNAs. The protein is tRNA pseudouridine synthase B of Xylella fastidiosa (strain Temecula1 / ATCC 700964).